The chain runs to 101 residues: Large ribosomal subunit protein eL21 (101 aa).

The segment covering 1 to 18 (MVKHSRGYRTRSRSLLRK) has biased composition (basic residues). Positions 1 to 23 (MVKHSRGYRTRSRSLLRKSPRER) are disordered.

The protein belongs to the eukaryotic ribosomal protein eL21 family.

The sequence is that of Large ribosomal subunit protein eL21 from Saccharolobus islandicus (strain Y.G.57.14 / Yellowstone #1) (Sulfolobus islandicus).